Consider the following 39-residue polypeptide: Putative beta-neurotoxin (39 aa).

The disordered stretch occupies residues 1-39; sequence GGKEGYPLNSSNGCKSGRFAGTNSNENTECKGXDAENGY. Residues 3–39 form the LCN-type CS-alpha/beta domain; that stretch reads KEGYPLNSSNGCKSGRFAGTNSNENTECKGXDAENGY. The segment covering 28–39 has biased composition (basic and acidic residues); sequence TECKGXDAENGY.

It belongs to the long (4 C-C) scorpion toxin superfamily. Sodium channel inhibitor family. Beta subfamily. In terms of tissue distribution, expressed by the venom gland.

The protein localises to the secreted. Its function is as follows. Beta toxins bind voltage-independently at site-4 of sodium channels (Nav) and shift the voltage of activation toward more negative potentials thereby affecting sodium channel activation and promoting spontaneous and repetitive firing. This chain is Putative beta-neurotoxin, found in Tityus pachyurus (Colombian scorpion).